We begin with the raw amino-acid sequence, 442 residues long: Chromosomal replication initiator protein DnaA (442 aa).

Residues 1–75 form a domain I, interacts with DnaA modulators region; sequence MDAWPRCLER…GNGEVALAVG (75 aa). The interval 75–104 is domain II; that stretch reads GSRPRAPEPAPAPVAATIAPQAAPIAPFAG. A domain III, AAA+ region region spans residues 105–322; the sequence is NLDSHYTFAN…GALNTLVARA (218 aa). ATP contacts are provided by Gly-150, Gly-152, Lys-153, and Thr-154. The tract at residues 323 to 442 is domain IV, binds dsDNA; sequence NFTGRSITVE…WEKLIRKLSE (120 aa).

The protein belongs to the DnaA family. Oligomerizes as a right-handed, spiral filament on DNA at oriC.

The protein resides in the cytoplasm. Its function is as follows. Plays an essential role in the initiation and regulation of chromosomal replication. ATP-DnaA binds to the origin of replication (oriC) to initiate formation of the DNA replication initiation complex once per cell cycle. Binds the DnaA box (a 9 base pair repeat at the origin) and separates the double-stranded (ds)DNA. Forms a right-handed helical filament on oriC DNA; dsDNA binds to the exterior of the filament while single-stranded (ss)DNA is stabiized in the filament's interior. The ATP-DnaA-oriC complex binds and stabilizes one strand of the AT-rich DNA unwinding element (DUE), permitting loading of DNA polymerase. After initiation quickly degrades to an ADP-DnaA complex that is not apt for DNA replication. Binds acidic phospholipids. In Xanthomonas oryzae pv. oryzae (strain PXO99A), this protein is Chromosomal replication initiator protein DnaA.